Here is a 321-residue protein sequence, read N- to C-terminus: Protein ABIL3 (321 aa).

2 disordered regions span residues 179–273 (TIRE…RSAS) and 279–298 (EKEAQKEPEHQQQPSKSKRL). Composition is skewed to low complexity over residues 204 to 215 (SATFSFSSIATA) and 240 to 255 (IRPSSISRPTTPSKSR). The span at 279-288 (EKEAQKEPEH) shows a compositional bias: basic and acidic residues.

It belongs to the ABI family. As to quaternary structure, binds SCAR.

The protein resides in the cytoplasm. Its subcellular location is the cytoskeleton. Functionally, involved in regulation of actin and microtubule organization. Part of a WAVE complex that activates the Arp2/3 complex. This is Protein ABIL3 (ABIL3) from Arabidopsis thaliana (Mouse-ear cress).